Reading from the N-terminus, the 613-residue chain is Ribosome-associated molecular chaperone SSB1 (613 aa).

The tract at residues 1–391 (MADGVFQGAI…ILTGQSTSDE (391 aa)) is nucleotide binding domain (NBD). ATP-binding positions include 16–18 (TTY), Lys73, 205–207 (GGT), 271–278 (ERAKRTLS), and Gly342. Residues 392–402 (TKDLLLLDVAP) form an inter-domain linker region. Positions 403 to 613 (LSLGVGMQGD…RVVTKAMSSR (211 aa)) are substrate binding domain (SBD). Residues 516–612 (SEDIEKMVNQ…KRVVTKAMSS (97 aa)) form a lid domain (SBDalpha) region. A Nuclear export signal motif is present at residues 574–582 (IEAALADAL).

This sequence belongs to the heat shock protein 70 family. Ssb-type Hsp70 subfamily. As to quaternary structure, binds to ribosomes. Binds close to the ribosomal tunnel exit via contacts with both ribosomal proteins and rRNA. Directly interacts with nascent polypeptides. This interaction is dependent on the ribosome-associated complex (RAC). Interacts with SSE1. Interacts with FES1.

It is found in the cytoplasm. It catalyses the reaction ATP + H2O = ADP + phosphate + H(+). In terms of biological role, ribosome-bound, Hsp70-type chaperone that assists in the cotranslational folding of newly synthesized proteins in the cytosol. Stimulates folding by interacting with nascent chains, binding to short, largely hydrophobic sequences exposed by unfolded proteins, thereby stabilizing longer, more slowly translated, and aggregation-prone nascent polypeptides and domains that cannot fold stably until fully synthesized. The Hsp70-protein substrate interaction depends on ATP-binding and on allosteric regulation between the NBD and the SBD. The ATP-bound state is characterized by a fast exchange rate of substrate (low affinity state), while in the ADP-bound state exchange is much slower (high affinity state). During the Hsp70 cycle, the chaperone switches between the ATP-bound state (open conformation) and the ADP-bound state (closed conformation) by major conformational rearrangements involving mainly the lid domain. Ssb cooperates with a specific Hsp40/Hsp70 co-chaperone termed the ribosome-associated complex (RAC), which stimulates the ATPase activity of the ribosome-associated pool of Ssbs and switches it to the high affinity substrate binding state. Hsp110 chaperone SSE1 and FES1 act as nucleotide exchange factors that cause substrate release. This Nakaseomyces delphensis (Yeast) protein is Ribosome-associated molecular chaperone SSB1 (SSB1).